A 680-amino-acid chain; its full sequence is MAANPRKILVTCALPYANGSIHLGHMLEHVQADIWVRYQRLRGNEVHFICADDAHGTPIMLKAQQMGMEPEQMIEEVSKEHQADFAGFDISFDNYHSTHSDENRELASFVYTQLKDKGYITNRTISQLFDPEKEMFLPDRFVKGTCPKCKAEDQYGDNCDNCGETYSPTDLIDPKSAVSGATPIMKDSEHFFFDLPQFEDMLKAWTKSGALQTETSNKMQEWFESGLHQWDISRDAPYFGFEIPGETSKYFYVWLDAPIGYMGSFKNLCDKRDDLDFDEFWKKDSTTELYHFIGKDIVYFHSLFWPAMLEGAGFRKPNNVFVHGYVTVNGAKMSKSKGTFIKAGTYLEHLDPECLRYYYAAKLNSRIDDLDLNLEDFTQRVNSDVVNKIVNLASRNAGFITKRFDGKLSETFAEPELYAEFANAADRIAELYETREFSRAIREITALADKANQYIDEKAPWVVAKQEGKDQELQDICSVGINLFRVLITYLKPVMPLLTERTEAFLNETLTWEGVAQPLTNHEVTKFKALFTRIDPKHVEAMVEASKEDAAAAQVLIEAAKPTGPLIDEPIEAEIEFDDFAKVDMRIAKIISCEAVPKANKLLKFQLDIGGEMRQVFSGIKSAYTPEELVGKHTVMVANLKPRKMKFGMSEGMILAAGPGGKDLWILEPHEGAQPGMRVM.

A 'HIGH' region motif is present at residues 15–25; that stretch reads PYANGSIHLGH. Positions 146, 149, 159, and 162 each coordinate Zn(2+). A 'KMSKS' region motif is present at residues 332–336; it reads KMSKS. Lys335 serves as a coordination point for ATP. The tRNA-binding domain occupies 579–680; sequence DFAKVDMRIA…EGAQPGMRVM (102 aa).

It belongs to the class-I aminoacyl-tRNA synthetase family. MetG type 1 subfamily. Homodimer. The cofactor is Zn(2+).

The protein localises to the cytoplasm. The catalysed reaction is tRNA(Met) + L-methionine + ATP = L-methionyl-tRNA(Met) + AMP + diphosphate. In terms of biological role, is required not only for elongation of protein synthesis but also for the initiation of all mRNA translation through initiator tRNA(fMet) aminoacylation. This chain is Methionine--tRNA ligase, found in Photobacterium profundum (strain SS9).